Here is a 484-residue protein sequence, read N- to C-terminus: ATP synthase subunit beta (484 aa).

Residue 156 to 163 (GGAGVGKT) coordinates ATP.

Belongs to the ATPase alpha/beta chains family. In terms of assembly, F-type ATPases have 2 components, CF(1) - the catalytic core - and CF(0) - the membrane proton channel. CF(1) has five subunits: alpha(3), beta(3), gamma(1), delta(1), epsilon(1). CF(0) has three main subunits: a(1), b(2) and c(9-12). The alpha and beta chains form an alternating ring which encloses part of the gamma chain. CF(1) is attached to CF(0) by a central stalk formed by the gamma and epsilon chains, while a peripheral stalk is formed by the delta and b chains.

The protein localises to the cell inner membrane. It carries out the reaction ATP + H2O + 4 H(+)(in) = ADP + phosphate + 5 H(+)(out). In terms of biological role, produces ATP from ADP in the presence of a proton gradient across the membrane. The catalytic sites are hosted primarily by the beta subunits. The polypeptide is ATP synthase subunit beta (Rhizorhabdus wittichii (strain DSM 6014 / CCUG 31198 / JCM 15750 / NBRC 105917 / EY 4224 / RW1) (Sphingomonas wittichii)).